A 365-amino-acid polypeptide reads, in one-letter code: Endophilin-B1 (365 aa).

M1 bears the N-acetylmethionine mark. Residues M1 to L30 are membrane-binding amphipathic helix. A required for membrane binding region spans residues M1–E37. Residues E27–S261 form the BAR domain. T145 is modified (phosphothreonine; by CDK5). Positions Y155 to E186 form a coiled coil. Residues S305–N365 form the SH3 domain.

The protein belongs to the endophilin family. In terms of assembly, homodimer, and heterodimer with SH3GLB2. Binds BAX; induction of apoptosis augments BAX binding. Binds DNM1, HTT, AMPH, BIN1 and ARFGAP1. Interacts with UVRAG; UVRAG bridges the interaction to BECN1 indicative for an association with the PI3K complex II (PI3KC3-C2). Isoform 3 interacts with PPP1CC; this interaction leads to the inhibition of phosphatase activity. Post-translationally, phosphorylated at Thr-145 by CDK5; this phosphorylation is required for autophagy induction in starved neurons and facilitates homodimerization. In terms of tissue distribution, isoform 1 is widely expressed. Isoform 2 is brain-specific. Isoform 3 is predominantly expressed in testis, but it is also detected in liver and, at much lower levels, in skin, stomach and ovary.

It localises to the cytoplasm. The protein localises to the golgi apparatus membrane. The protein resides in the mitochondrion outer membrane. Its subcellular location is the cytoplasmic vesicle. It is found in the autophagosome membrane. It localises to the midbody. May be required for normal outer mitochondrial membrane dynamics. Required for coatomer-mediated retrograde transport in certain cells. May recruit other proteins to membranes with high curvature. May promote membrane fusion. Involved in activation of caspase-dependent apoptosis by promoting BAX/BAK1 activation. Isoform 1 acts proapoptotic in fibroblasts. Involved in caspase-independent apoptosis during nutrition starvation and involved in the regulation of autophagy. Activates lipid kinase activity of PIK3C3 during autophagy probably by associating with the PI3K complex II (PI3KC3-C2). Associated with PI3KC3-C2 during autophagy may regulate the trafficking of ATG9A from the Golgi complex to the peripheral cytoplasm for the formation of autophagosomes by inducing Golgi membrane tubulation and fragmentation. Involved in regulation of degradative endocytic trafficking and cytokinesis, probably in the context of PI3KC3-C2. Isoform 2 acts antiapoptotic in neuronal cells; involved in maintenance of mitochondrial morphology and promotes neuronal viability. This Mus musculus (Mouse) protein is Endophilin-B1 (Sh3glb1).